A 197-amino-acid chain; its full sequence is Imidazoleglycerol-phosphate dehydratase (197 aa).

This sequence belongs to the imidazoleglycerol-phosphate dehydratase family.

Its subcellular location is the cytoplasm. The catalysed reaction is D-erythro-1-(imidazol-4-yl)glycerol 3-phosphate = 3-(imidazol-4-yl)-2-oxopropyl phosphate + H2O. It functions in the pathway amino-acid biosynthesis; L-histidine biosynthesis; L-histidine from 5-phospho-alpha-D-ribose 1-diphosphate: step 6/9. This chain is Imidazoleglycerol-phosphate dehydratase, found in Rhodopseudomonas palustris (strain BisA53).